The primary structure comprises 76 residues: Small ribosomal subunit protein bS18 (76 aa).

Belongs to the bacterial ribosomal protein bS18 family. Part of the 30S ribosomal subunit. Forms a tight heterodimer with protein bS6.

Binds as a heterodimer with protein bS6 to the central domain of the 16S rRNA, where it helps stabilize the platform of the 30S subunit. The chain is Small ribosomal subunit protein bS18 from Stutzerimonas stutzeri (strain A1501) (Pseudomonas stutzeri).